The following is a 127-amino-acid chain: Class I hydrophobin 1 (127 aa).

A signal peptide spans 1-20; sequence MLSLLSKAVSLAILVTAVVA. 4 disulfide bridges follow: C53/C108, C60/C102, C61/C94, and C109/C122. N-linked (GlcNAc...) asparagine glycosylation occurs at N66.

The protein belongs to the fungal hydrophobin family. Self-assembles to form functional amyloid fibrils called rodlets. Self-assembly into fibrillar rodlets occurs spontaneously at hydrophobic:hydrophilic interfaces and the rodlets further associate laterally to form amphipathic monolayers. Expressed everywhere in the mycelial tissues of developing fruiting bodies except for the top parts of the pileus (cap) and for the prehymenophore; but high level of the transcript is detected in the parts surrounding the prehymenophore.

The protein resides in the secreted. The protein localises to the cell wall. In terms of biological role, aerial growth, conidiation, and dispersal of filamentous fungi in the environment rely upon a capability of their secreting small amphipathic proteins called hydrophobins (HPBs) with low sequence identity. Class I can self-assemble into an outermost layer of rodlet bundles on aerial cell surfaces, conferring cellular hydrophobicity that supports fungal growth, development and dispersal; whereas Class II form highly ordered films at water-air interfaces through intermolecular interactions but contribute nothing to the rodlet structure. Hyd1 is a class I hydrophobin that plays a role in fruiting body initiation rather than in mature fruit body maintenance. Seems to be involved in the formation in the extracellular matrix of lined air channels with a hydrophobic membrane. These channels may help to provide gas exchange during respiration in mycelial tissues of developing fruiting bodies and are formed all over the mycelial tissues of these developing fruiting bodies except for the top parts of the pileus (cap) and for the prehymenophore. The protein is Class I hydrophobin 1 of Lentinula edodes (Shiitake mushroom).